The primary structure comprises 462 residues: UDP-N-acetylmuramate--L-alanine ligase (462 aa).

119 to 125 (GTHGKTT) provides a ligand contact to ATP.

This sequence belongs to the MurCDEF family.

The protein resides in the cytoplasm. The catalysed reaction is UDP-N-acetyl-alpha-D-muramate + L-alanine + ATP = UDP-N-acetyl-alpha-D-muramoyl-L-alanine + ADP + phosphate + H(+). It functions in the pathway cell wall biogenesis; peptidoglycan biosynthesis. Cell wall formation. The polypeptide is UDP-N-acetylmuramate--L-alanine ligase (Parabacteroides distasonis (strain ATCC 8503 / DSM 20701 / CIP 104284 / JCM 5825 / NCTC 11152)).